Reading from the N-terminus, the 137-residue chain is Large ribosomal subunit protein uL16 (137 aa).

The protein belongs to the universal ribosomal protein uL16 family. In terms of assembly, part of the 50S ribosomal subunit.

Its function is as follows. Binds 23S rRNA and is also seen to make contacts with the A and possibly P site tRNAs. The protein is Large ribosomal subunit protein uL16 of Pseudomonas putida (strain ATCC 47054 / DSM 6125 / CFBP 8728 / NCIMB 11950 / KT2440).